The sequence spans 563 residues: Protein disulfide isomerase-like 1-4 (563 aa).

The signal sequence occupies residues 1-22; sequence MRSRSLLLVALATLLLHASASA. The tract at residues 40-64 is disordered; sequence NDPDGWLQEGSPDDDDDDDLFHHGQ. Residues 46–180 form the Thioredoxin 1 domain; it reads LQEGSPDDDD…IVSWVNKKLA (135 aa). Asn-82 carries N-linked (GlcNAc...) asparagine glycosylation. Catalysis depends on nucleophile residues Cys-102 and Cys-105. A disulfide bond links Cys-102 and Cys-105. Residues Asn-185 and Asn-315 are each glycosylated (N-linked (GlcNAc...) asparagine). The Thioredoxin 2 domain occupies 394–523; it reads FLEEKLTPFY…MYKFIKKHAS (130 aa). Catalysis depends on nucleophile residues Cys-444 and Cys-447. Cysteines 444 and 447 form a disulfide. A compositionally biased stretch (basic and acidic residues) spans 529 to 542; the sequence is KRPDSSATKTEKDQ. Positions 529–563 are disordered; sequence KRPDSSATKTEKDQSTASTNLRGERSSGTNFKDEL. Positions 543–563 are enriched in polar residues; that stretch reads STASTNLRGERSSGTNFKDEL. Residues 560 to 563 carry the Prevents secretion from ER motif; sequence KDEL.

It belongs to the protein disulfide isomerase family.

The protein localises to the endoplasmic reticulum lumen. The catalysed reaction is Catalyzes the rearrangement of -S-S- bonds in proteins.. Functionally, acts as a protein-folding catalyst that interacts with nascent polypeptides to catalyze the formation, isomerization, and reduction or oxidation of disulfide bonds. May play a role in storage protein biogenesis. This Oryza sativa subsp. japonica (Rice) protein is Protein disulfide isomerase-like 1-4 (PDIL1-4).